Reading from the N-terminus, the 576-residue chain is Laccase-1 (576 aa).

Positions 1–19 are cleaved as a signal peptide; sequence MARTTFLVSVSLFVSAVLA. Plastocyanin-like domains are found at residues 21 to 145 and 157 to 304; these read TVEY…LVIY and VDDE…LVYE. N41 carries an N-linked (GlcNAc...) asparagine glycan. 4 residues coordinate Cu cation: H82, H84, H127, and H129. C103 and C562 are oxidised to a cystine. N182, N228, N294, and N368 each carry an N-linked (GlcNAc...) asparagine glycan. A Plastocyanin-like 3 domain is found at 376-576; the sequence is DESKLVPLEY…NWLKSNPGQL (201 aa). Cu cation is bound by residues H471, H474, H476, H523, C524, H525, and H529.

Belongs to the multicopper oxidase family. In terms of assembly, homodimer. Requires Cu cation as cofactor. In terms of tissue distribution, in mycelia, at a lower level than LCC4.

It localises to the secreted. It carries out the reaction 4 hydroquinone + O2 = 4 benzosemiquinone + 2 H2O. Its function is as follows. Lignin degradation and detoxification of lignin-derived products. This Thanatephorus cucumeris (Black scurf of potato) protein is Laccase-1 (LCC1).